A 451-amino-acid chain; its full sequence is Tubulin gamma-1 chain (451 aa).

Position 131 is a phosphoserine; by BRSK1 (Ser-131). GTP is bound at residue 142–148 (AGGTGSG).

The protein belongs to the tubulin family. As to quaternary structure, component of the gamma-tubulin ring complex (gTuRC) consisting of TUBGCP2, TUBGCP3, TUBGCP4, TUBGCP5 and TUBGCP6 and gamma-tubulin TUBG1 or TUBG2. TUBGCP2, TUBGCP3, TUBGCP4, TUBGCP5 and TUBGCP6 assemble in a 5:5:2:1:1 stoichiometry; each is associated with a gamma-tubulin, thereby arranging 14 gamma-tubulins in a helical manner. Gamma-tubulin at the first position is blocked by TUBGCP3 at the last position, allowing 13 protafilaments to grow into a microtubule. The gTuRC (via TUBGCP3 and TUBGCP6) interacts with ACTB and MZT1; the interactions form a luminal bridge that stabilizes the initial structure during complex assembly. The gTuRC (via TUBGCP2) interacts with MZT2A/MZT2B and CDK5RAP2 (via CM1 motif); the interactions play a role in gTuRC activation. Interacts with alpha-beta tubulin heterodimers; the interaction allows microtubules to nucleate from the gTuRC. Interacts with B9D2. Interacts with CDK5RAP2; the interaction is leading to centrosomal localization of TUBG1 and CDK5RAP2. Interacts with CIMAP3. Interacts with SAS6 and NUP62 at the centrosome. Interacts with EML3 (phosphorylated at 'Thr-881') and HAUS8. Interacts with DNM2; this interaction may participate in centrosome cohesion. Interacts with CCDC66. Phosphorylation at Ser-131 by BRSK1 regulates centrosome duplication, possibly by mediating relocation of gamma-tubulin and its associated proteins from the cytoplasm to the centrosome.

Its subcellular location is the cytoplasm. The protein resides in the cytoskeleton. It is found in the microtubule organizing center. It localises to the centrosome. The protein localises to the spindle. Functionally, tubulin is the major constituent of microtubules, protein filaments consisting of alpha- and beta-tubulin heterodimers. Gamma-tubulin is a key component of the gamma-tubulin ring complex (gTuRC) which mediates microtubule nucleation. The gTuRC regulates the minus-end nucleation of alpha-beta tubulin heterodimers that grow into microtubule protafilaments, a critical step in centrosome duplication and spindle formation. The chain is Tubulin gamma-1 chain from Bos taurus (Bovine).